A 299-amino-acid polypeptide reads, in one-letter code: Trans-aconitate 3-methyltransferase (299 aa).

N-acetylserine is present on S2.

It belongs to the methyltransferase superfamily. Tam family.

Its subcellular location is the cytoplasm. The catalysed reaction is trans-aconitate + S-adenosyl-L-methionine = (E)-2-(methoxycarbonylmethyl)but-2-enedioate + S-adenosyl-L-homocysteine. In terms of biological role, catalyzes the S-adenosylmethionine monomethyl esterification of trans-aconitate and 3-isopropylmalate at high affinity and of other molecules like cis-aconitate, isocitrate, and citrate at lower velocities and affinities. The function of trans-aconitate methylation appears to be in reducing the toxicity of this spontaneous breakdown product of cis-aconitate. The role of 3-isopropylmalate methylation is unclear but may represent a metabolic branch at 3-isopropylmalate, where some of the material is taken in the pathway leading to leucine and some is taken in a pathway to the 3-isopropylmalate methyl ester, a molecule that provides a signal to switch from vegetative to invasive growth in response to amino acid starvation. This chain is Trans-aconitate 3-methyltransferase (TMT1), found in Saccharomyces cerevisiae (strain YJM789) (Baker's yeast).